We begin with the raw amino-acid sequence, 583 residues long: Proline--tRNA ligase (583 aa).

This sequence belongs to the class-II aminoacyl-tRNA synthetase family. ProS type 1 subfamily. In terms of assembly, homodimer.

Its subcellular location is the cytoplasm. The catalysed reaction is tRNA(Pro) + L-proline + ATP = L-prolyl-tRNA(Pro) + AMP + diphosphate. In terms of biological role, catalyzes the attachment of proline to tRNA(Pro) in a two-step reaction: proline is first activated by ATP to form Pro-AMP and then transferred to the acceptor end of tRNA(Pro). As ProRS can inadvertently accommodate and process non-cognate amino acids such as alanine and cysteine, to avoid such errors it has two additional distinct editing activities against alanine. One activity is designated as 'pretransfer' editing and involves the tRNA(Pro)-independent hydrolysis of activated Ala-AMP. The other activity is designated 'posttransfer' editing and involves deacylation of mischarged Ala-tRNA(Pro). The misacylated Cys-tRNA(Pro) is not edited by ProRS. The polypeptide is Proline--tRNA ligase (Acidothermus cellulolyticus (strain ATCC 43068 / DSM 8971 / 11B)).